Consider the following 315-residue polypeptide: Eukaryotic translation initiation factor 2 subunit 1 (315 aa).

The S1 motif domain occupies 17–88 (EDVVMVNVRS…EKGYIDLSKR (72 aa)). Ser49 is subject to Phosphoserine; by HRI. Ser52 bears the Phosphoserine mark. The residue at position 141 (Lys141) is an N6-acetyllysine. Ser158 carries the phosphoserine modification. Residues Thr279 and Thr281 each carry the phosphothreonine modification. The segment at 293–315 (LERENAEVDGDDDAEEMEAKAED) is disordered. Residues 299–308 (EVDGDDDAEE) show a composition bias toward acidic residues.

It belongs to the eIF-2-alpha family. As to quaternary structure, eukaryotic translation initiation factor 2 eIF2 is a heterotrimeric complex composed of an alpha (EIF2S1), a beta (EIF2S2) and a gamma (EIF2S3) chain. eIF2 is member of the 43S pre-initiation complex (43S PIC). eIF2 forms a complex with at least CELF1/CUGBP1, CALR, CALR3, EIF2S1, EIF2S2, HSP90B1 and HSPA5. Interaction with METAP2 protects EIF2S1 from inhibitory phosphorylation. Interacts with ABCF1. Associates with ribosomes. Interacts with DDX3X in an RNA-independent manner. Phosphorylation at Ser-49 and Ser-52 stabilizes the eIF-2/GDP/eIF2B complex and prevents GDP/GTP exchange reaction, thus impairing the recycling of eIF-2 between successive rounds of initiation and leading to global inhibition of translation, while concomitantly initiating the preferential translation of integrated stress response (ISR)-specific mRNAs. Substrate for at least 4 kinases: EIF2AK1/HRI, EIF2AK2/PKR, EIF2AK3/PERK and EIF2AK4/GCN2. Phosphorylation on Ser-52 by the EIF2AK4/GCN2 protein kinase occurs in response to amino acid starvation and UV irradiation. Phosphorylation at Ser-52 by the EIF2AK3/PERK protein kinase occurs in response to the unfolded protein response. Phosphorylation at Ser-52 by EIF2AK1/HRI in response to mitochondrial damage promotes relocalization to the mitochondrial surface.

It is found in the cytoplasm. Its subcellular location is the stress granule. The protein resides in the cytosol. The protein localises to the mitochondrion. Activity is regulated by phosphorylation at Ser-49 and Ser-52, which stabilizes the eIF2/GDP/eIF2B complex and prevents the eIF2B-mediated exchange of GDP for GTP, thereby preventing the formation of the 43S pre-initiation complex (43S PIC). This results in the global attenuation of 5' cap-dependent protein synthesis and concomitant translation of ISR-specific mRNAs that contain a short upstream open reading frame (uORF) in their 5' UTR, such as ATF4, ATF5, DDIT3/CHOP and PPP1R15A/GADD34. Functionally, member of the eIF2 complex that functions in the early steps of protein synthesis by forming a ternary complex with GTP and initiator tRNA. This complex binds to a 40S ribosomal subunit, followed by mRNA binding to form a 43S pre-initiation complex. Junction of the 60S ribosomal subunit to form the 80S initiation complex is preceded by hydrolysis of the GTP bound to eIF2 and release of an eIF2-GDP binary complex. In order for eIF2 to recycle and catalyze another round of initiation, the GDP bound to eIF2 must exchange with GTP by way of a reaction catalyzed by eIF2B. EIF2S1/eIF2-alpha is a key component of the integrated stress response (ISR), required for adaptation to various stress: phosphorylation by metabolic-stress sensing protein kinases (EIF2AK1/HRI, EIF2AK2/PKR, EIF2AK3/PERK and EIF2AK4/GCN2) in response to stress converts EIF2S1/eIF2-alpha in a global protein synthesis inhibitor, leading to a attenuation of cap-dependent translation, while concomitantly initiating the preferential translation of ISR-specific mRNAs, such as the transcriptional activators ATF4 and QRICH1, and hence allowing ATF4- and QRICH1-mediated reprogramming. EIF2S1/eIF2-alpha also acts as an activator of mitophagy in response to mitochondrial damage: phosphorylation by EIF2AK1/HRI promotes relocalization to the mitochondrial surface, thereby triggering PRKN-independent mitophagy. This Pongo abelii (Sumatran orangutan) protein is Eukaryotic translation initiation factor 2 subunit 1 (EIF2S1).